Here is a 1744-residue protein sequence, read N- to C-terminus: DNA-directed RNA polymerase I subunit RPA1 (1744 aa).

Cys56, Cys69, and His72 together coordinate Zn(2+). The Mg(2+) site is built by Asp597, Asp599, and Asp601. A bridging helix region spans residues 953–965; it reads PAEYTIHAMAGRD. Residues 1333-1484 form a disordered region; it reads VPREKESGDG…RDGTDWGGTS (152 aa). Gly residues-rich tracts occupy residues 1341 to 1354 and 1366 to 1376; these read DGSG…GGSG and DDGGGPLGGTF. Positions 1464-1478 are enriched in basic and acidic residues; the sequence is RDAEDGGEMQDRDGT.

Belongs to the RNA polymerase beta' chain family. As to quaternary structure, component of the RNA polymerase I (Pol I) complex consisting of at least 13 subunits. In terms of processing, phosphorylated.

It is found in the nucleus. The protein resides in the nucleolus. The catalysed reaction is RNA(n) + a ribonucleoside 5'-triphosphate = RNA(n+1) + diphosphate. Its function is as follows. DNA-dependent RNA polymerase catalyzes the transcription of DNA into RNA using the four ribonucleoside triphosphates as substrates. Largest and catalytic core component of RNA polymerase I which synthesizes ribosomal RNA precursors. Forms the polymerase active center together with the second largest subunit. A single stranded DNA template strand of the promoter is positioned within the central active site cleft of Pol I. A bridging helix emanates from RPA1 and crosses the cleft near the catalytic site and is thought to promote translocation of Pol I by acting as a ratchet that moves the RNA-DNA hybrid through the active site by switching from straight to bent conformations at each step of nucleotide addition. In Trypanosoma brucei brucei, this protein is DNA-directed RNA polymerase I subunit RPA1 (TRP11).